Reading from the N-terminus, the 400-residue chain is Aspartate/prephenate aminotransferase (400 aa).

3 residues coordinate L-aspartate: Gly-39, Trp-125, and Asn-175. Lys-239 bears the N6-(pyridoxal phosphate)lysine mark. Arg-375 is a binding site for L-aspartate.

Belongs to the class-I pyridoxal-phosphate-dependent aminotransferase family. Homodimer. Pyridoxal 5'-phosphate serves as cofactor.

It is found in the cytoplasm. It catalyses the reaction L-aspartate + 2-oxoglutarate = oxaloacetate + L-glutamate. It carries out the reaction L-arogenate + 2-oxoglutarate = prephenate + L-glutamate. Catalyzes the reversible conversion of aspartate and 2-oxoglutarate to glutamate and oxaloacetate. Can also transaminate prephenate in the presence of glutamate. The chain is Aspartate/prephenate aminotransferase from Cereibacter sphaeroides (strain ATCC 17029 / ATH 2.4.9) (Rhodobacter sphaeroides).